The primary structure comprises 345 residues: Esterase (345 aa).

Positions 1-39 (MSSAMRKTTNSPVVRRLTAAAVALGSCLALAGPAGSAGA) are cleaved as a signal peptide. 3 cysteine pairs are disulfide-bonded: C73-C103, C156-C180, and C236-C294.

The protein resides in the secreted. This is Esterase (estA) from Streptomyces scabiei.